The primary structure comprises 168 residues: Phosphopantetheine adenylyltransferase (168 aa).

Ser8 lines the substrate pocket. Residues 8–9 (SF) and His16 each bind ATP. Substrate-binding residues include Lys40, Ala72, and Arg86. Residues 87–89 (GLR), Glu97, and 122–128 (YSFLSSS) contribute to the ATP site.

It belongs to the bacterial CoaD family. Homohexamer. Mg(2+) is required as a cofactor.

The protein localises to the cytoplasm. The enzyme catalyses (R)-4'-phosphopantetheine + ATP + H(+) = 3'-dephospho-CoA + diphosphate. The protein operates within cofactor biosynthesis; coenzyme A biosynthesis; CoA from (R)-pantothenate: step 4/5. In terms of biological role, reversibly transfers an adenylyl group from ATP to 4'-phosphopantetheine, yielding dephospho-CoA (dPCoA) and pyrophosphate. In Trichodesmium erythraeum (strain IMS101), this protein is Phosphopantetheine adenylyltransferase.